The following is a 309-amino-acid chain: Probable manganese-dependent inorganic pyrophosphatase (309 aa).

Residues histidine 9, aspartate 13, aspartate 15, aspartate 75, histidine 97, and aspartate 149 each coordinate Mn(2+).

This sequence belongs to the PPase class C family. The cofactor is Mn(2+).

The protein resides in the cytoplasm. The catalysed reaction is diphosphate + H2O = 2 phosphate + H(+). This is Probable manganese-dependent inorganic pyrophosphatase from Staphylococcus aureus (strain COL).